Reading from the N-terminus, the 494-residue chain is Ribitol 5-phosphate transferase FKRP (494 aa).

Over 1-6 (MRLTRC) the chain is Cytoplasmic. The helical transmembrane segment at 7–29 (WAALAAAIILNLLVFFYVSWLQH) threads the bilayer. Residues 30–494 (QPRNSRARGP…NPALLSLTGG (465 aa)) lie on the Lumenal side of the membrane. An intrachain disulfide couples Cys168 to Cys191. 2 N-linked (GlcNAc...) asparagine glycosylation sites follow: Asn172 and Asn209. Positions 289, 296, 317, and 318 each coordinate Zn(2+). Residues 289-318 (CSKESARCFGTVAGDTPAYLYEGRWTPPCC) form a zinc finger loop region. Positions 345 and 352 each coordinate CDP-L-ribitol. 3 CDP-L-ribitol regions span residues 359–364 (WDYDVD), 437–438 (QD), and 480–482 (NPE). Mg(2+) contacts are provided by Asp360, Asp362, and Asp364.

Belongs to the LicD transferase family. In terms of assembly, homodimer; disulfide-linked. Forms a complex composed of FKRP, FKTN/fukutin, and RXYLT1/TMEM5. Also exists as large multimeric protein complexes. May interact with the dystrophin-glycoprotein complex (DGC). In terms of processing, N-glycosylated. In terms of tissue distribution, expressed in the retina, specifically in the inner segments of the photoreceptors, the outer plexiform layers, inner nuclear layers, and ganglion cell layers (at protein level). Expressed at highest levels in brain, lung, heart, kidney and liver.

The protein localises to the golgi apparatus membrane. It is found in the secreted. The protein resides in the cell membrane. Its subcellular location is the sarcolemma. It localises to the rough endoplasmic reticulum. The protein localises to the cytoplasm. It carries out the reaction 3-O-[Rib-ol-P-3-beta-D-GalNAc-(1-&gt;3)-beta-D-GlcNAc-(1-&gt;4)-(O-6-P-alpha-D-Man)]-Thr-[protein] + CDP-L-ribitol = 3-O-[Rib-ol-P-Rib-ol-P-3-beta-D-GalNAc-(1-&gt;3)-beta-D-GlcNAc-(1-&gt;4)-(O-6-P-alpha-D-Man)]-Thr-[protein] + CMP + H(+). It participates in protein modification; protein glycosylation. In terms of biological role, catalyzes the transfer of CDP-ribitol to ribitol 5-phosphate previously attached by FKTN/fukutin of to the phosphorylated O-mannosyl trisaccharide (N-acetylgalactosamine-beta-3-N-acetylglucosamine-beta-4-(phosphate-6-)mannose), a carbohydrate structure present in alpha-dystroglycan (DAG1). This constitutes the second step in the formation of the ribose 5-phosphate tandem repeat which links the phosphorylated O-mannosyl trisaccharide to the ligand binding moiety composed of repeats of 3-xylosyl-alpha-1,3-glucuronic acid-beta-1. In Mus musculus (Mouse), this protein is Ribitol 5-phosphate transferase FKRP.